A 281-amino-acid polypeptide reads, in one-letter code: Probable endonuclease 4 (281 aa).

Zn(2+) contacts are provided by H69, H109, E145, D179, H182, H216, D229, H231, and E261.

Belongs to the AP endonuclease 2 family. Zn(2+) serves as cofactor.

It catalyses the reaction Endonucleolytic cleavage to 5'-phosphooligonucleotide end-products.. Endonuclease IV plays a role in DNA repair. It cleaves phosphodiester bonds at apurinic or apyrimidinic (AP) sites, generating a 3'-hydroxyl group and a 5'-terminal sugar phosphate. This Aeromonas salmonicida (strain A449) protein is Probable endonuclease 4.